We begin with the raw amino-acid sequence, 571 residues long: Asparagine--tRNA ligase, cytoplasmic 3 (571 aa).

N-acetylglycine is present on Gly-2. A DNA-binding region (OB) is located at residues 50–128; sequence VRIGGWVKTG…QSIELSVETV (79 aa). Residues 233 to 289 enclose the WHEP-TRS domain; the sequence is DVEAARLIVKERGEAVAQLKVAKASKEEITASVAQLSVAKASLAHVEERLRLKPGLP.

The protein belongs to the class-II aminoacyl-tRNA synthetase family.

The protein localises to the cytoplasm. It is found in the cytosol. It carries out the reaction tRNA(Asn) + L-asparagine + ATP = L-asparaginyl-tRNA(Asn) + AMP + diphosphate + H(+). This is Asparagine--tRNA ligase, cytoplasmic 3 from Arabidopsis thaliana (Mouse-ear cress).